Consider the following 136-residue polypeptide: MLERNLTSMMSVEEPLPRPLTSLYIRLSILERNHMNMTYMAKSSVKIHISKVIIGFVLKRSLTNVCGKVLSQNSHLVNHQRIHTGEKSYRCHECGKAFTQGSRFINHQIVHTGENFPNVLNVARLLRMALNSGLTK.

The C2H2-type 1; degenerate zinc-finger motif lies at 64–83; that stretch reads NVCGKVLSQNSHLVNHQRIH. The C2H2-type 2 zinc-finger motif lies at 89–111; sequence YRCHECGKAFTQGSRFINHQIVH.

This sequence belongs to the krueppel C2H2-type zinc-finger protein family.

It localises to the nucleus. May be involved in transcriptional regulation. The polypeptide is Putative zinc finger protein 818 (ZNF818P) (Homo sapiens (Human)).